Here is a 132-residue protein sequence, read N- to C-terminus: Matrix protein (132 aa).

The protein localises to the virion membrane. In terms of biological role, envelope protein that may play a role in host-cell attachment and viral genome entry. This Halorubrum pleomorphic virus 1 (HRPV-1) protein is Matrix protein.